The chain runs to 887 residues: MSHRILSPPAGLLSDEDVVDSPILESTAADLRSVVRKDLLSDCSVISASLEDKQALLEDTSEKVKVYLRIRPFLTSELDRQEDQGCVCIENTETLVLQAPKDSFALKSNERGVGQATHKFTFSQIFGPEVGQVAFFNLTMKEMVKDVLKGQNWLIYTYGVTNSGKTYTIQGTSKDAGILPQSLALIFNSLQGQLHPTPDLKPLLSNEVIWLDSKQIRQEEMKKLSLLIGGLQEEELSTSVKKRVHTESRIGASNSFDSGVAGLSSTSQFTSSSQLDETSQLWAQPDTVPVSVPADIRFSVWISFFEIYNELLYDLLEPPSHQHKRQTLRLCEDQNGNPYVKDLNWIHVRDVEEAWKLLKVGRKNQSFASTHMNQQSSRSHSIFSIRILHLQGEGDIVPKISELSLCDLAGSERCKHQKSGERLKEAGNINTSLHTLGRCIAALRQNQQNRSKQNLIPFRDSKLTRVFQGFFTGRGRSCMIVNVNPCASTYDETLHAAKFSALASQLVHAPPVHLGIPSLHSFIKKHSPQVGPGLEKEDKADSDLEDSPEDEADVSVYGKEELLQVVEAMKALLLKERQEKLQLEIQLREEICNEMVEQMQQREQWCSERLDNQKELMEELYEEKLKILKESLTTFYQEQIQERDEKIEELETLLQEAKQQPAAQQSGGLSLLRRSQRLAASASTQQFQEVKAELEQCKTELSSTTAELHKYQQVLKPPPPAKPFTIDVDKKLEEGQKNIRLLRTELQKLGQSLQSAERACCHSTGAGKLRQALTNCDDILIKQNQTLAELQNNMVLVKLDLQKKAACIAEQYHTVLKLQGQASAKKRLGANQENQQPNHQPPGKKPFLRNLLPRTPTCQSSTDSSPYARILRSRHSPLLKSPFGKKY.

At Ser2 the chain carries N-acetylserine. Ser7, Ser14, and Ser21 each carry phosphoserine. A Kinesin motor domain is found at 63-506 (KVKVYLRIRP…AKFSALASQL (444 aa)). 159–166 (GVTNSGKT) is a binding site for ATP. Ser527 is subject to Phosphoserine; by PLK1. Residues 527–553 (SPQVGPGLEKEDKADSDLEDSPEDEAD) are disordered. The segment covering 543 to 553 (DLEDSPEDEAD) has biased composition (acidic residues). A coiled-coil region spans residues 559 to 804 (KEELLQVVEA…VLVKLDLQKK (246 aa)). Ser683 and Ser823 each carry phosphoserine. The tract at residues 805–887 (AACIAEQYHT…LLKSPFGKKY (83 aa)) is globular. A disordered region spans residues 826-875 (KRLGANQENQQPNHQPPGKKPFLRNLLPRTPTCQSSTDSSPYARILRSRH). At Thr855 the chain carries Phosphothreonine. Residues 856-865 (PTCQSSTDSS) show a composition bias toward polar residues. 3 positions are modified to phosphoserine: Ser865, Ser876, and Ser881.

The protein belongs to the TRAFAC class myosin-kinesin ATPase superfamily. Kinesin family. In terms of processing, phosphorylated by PLK1 at Ser-527 during mitosis, creating a docking site for PLK1 and recruiting PLK1 at central spindle. As to expression, ubiquitously expressed, with highest levels in spleen and testis.

It localises to the golgi apparatus. The protein localises to the cytoplasm. The protein resides in the cytoskeleton. Its subcellular location is the spindle. Its function is as follows. Mitotic kinesin required for chromosome passenger complex (CPC)-mediated cytokinesis. Following phosphorylation by PLK1, involved in recruitment of PLK1 to the central spindle. Interacts with guanosine triphosphate (GTP)-bound forms of RAB6A and RAB6B. May act as a motor required for the retrograde RAB6 regulated transport of Golgi membranes and associated vesicles along microtubules. Has a microtubule plus end-directed motility. This is Kinesin-like protein KIF20A (Kif20a) from Mus musculus (Mouse).